The sequence spans 278 residues: MQWLRVRESPGEATGHRVTMGTAALGPVWAALLLFLLMCEIPMVELTFDRAVASGCQRCCDSEDPLDPAHVSSASSSGRPHALPEIRPYINITILKGDKGDPGPMGLPGYMGREGPQGEPGPQGSKGDKGEMGSPGAPCQKRFFAFSVGRKTALHSGEDFQTLLFERVFVNLDGCFDMATGQFAAPLRGIYFFSLNVHSWNYKETYVHIMHNQKEAVILYAQPSERSIMQSQSVMLDLAYGDRVWVRLFKRQRENAIYSNDFDTYITFSGHLIKAEDD.

A signal peptide spans methionine 1–leucine 46. Asparagine 91 carries an N-linked (GlcNAc...) asparagine glycan. Residues glycine 97–proline 138 enclose the Collagen-like domain. The interval lysine 99 to proline 135 is disordered. Residues cysteine 139–serine 259 enclose the C1q domain.

The protein resides in the secreted. This Homo sapiens (Human) protein is Complement C1q tumor necrosis factor-related protein 6 (C1QTNF6).